The primary structure comprises 364 residues: UDP-N-acetylglucosamine--N-acetylmuramyl-(pentapeptide) pyrophosphoryl-undecaprenol N-acetylglucosamine transferase 1 (364 aa).

UDP-N-acetyl-alpha-D-glucosamine contacts are provided by residues 10-12 (TGG), Asn124, Ser195, Ile250, and Gln295.

This sequence belongs to the glycosyltransferase 28 family. MurG subfamily.

The protein resides in the cell membrane. It catalyses the reaction di-trans,octa-cis-undecaprenyl diphospho-N-acetyl-alpha-D-muramoyl-L-alanyl-D-glutamyl-meso-2,6-diaminopimeloyl-D-alanyl-D-alanine + UDP-N-acetyl-alpha-D-glucosamine = di-trans,octa-cis-undecaprenyl diphospho-[N-acetyl-alpha-D-glucosaminyl-(1-&gt;4)]-N-acetyl-alpha-D-muramoyl-L-alanyl-D-glutamyl-meso-2,6-diaminopimeloyl-D-alanyl-D-alanine + UDP + H(+). It functions in the pathway cell wall biogenesis; peptidoglycan biosynthesis. In terms of biological role, cell wall formation. Catalyzes the transfer of a GlcNAc subunit on undecaprenyl-pyrophosphoryl-MurNAc-pentapeptide (lipid intermediate I) to form undecaprenyl-pyrophosphoryl-MurNAc-(pentapeptide)GlcNAc (lipid intermediate II). This chain is UDP-N-acetylglucosamine--N-acetylmuramyl-(pentapeptide) pyrophosphoryl-undecaprenol N-acetylglucosamine transferase 1, found in Bacillus thuringiensis subsp. konkukian (strain 97-27).